The sequence spans 625 residues: MKREYQEAGGSSGGGSSADMGSCKDKVMAGAAGEEEDVDELLAALGYKVRSSDMADVAQKLEQLEMAMGMGGVSAPGAADDGFVSHLATDTVHYNPSDLSSWVESMLSELNAPLPPIPPAPPAARHASTSSTVTGGGGSGFFELPAAADSSSSTYALRPISLPVVATADPSAADSARDTKRMRTGGGSTSSSSSSSSSLGGGASRGSVVEAAPPATQGAAAANAPAVPVVVVDTQEAGIRLVHALLACAEAVQQENFAAAEALVKQIPTLAASQGGAMRKVAAYFGEALARRVYRFRPADSTLLDAAFADLLHAHFYESCPYLKFAHFTANQAILEAFAGCHRVHVVDFGIKQGMQWPALLQALALRPGGPPSFRLTGVGPPQPDETDALQQVGWKLAQFAHTIRVDFQYRGLVAATLADLEPFMLQPEGEADANEEPEVIAVNSVFELHRLLAQPGALEKVLGTVHAVRPRIVTVVEQEANHNSGSFLDRFTESLHYYSTMFDSLEGGSSGQAELSPPAAGGGGGTDQVMSEVYLGRQICNVVACEGAERTERHETLGQWRNRLGRAGFEPVHLGSNAYKQASTLLALFAGGDGYRVEEKEGCLTLGWHTRPLIATSAWRVAAA.

A disordered region spans residues 1–34 (MKREYQEAGGSSGGGSSADMGSCKDKVMAGAAGE). The DELLA motif signature appears at 39-43 (DELLA). The disordered stretch occupies residues 167–209 (TADPSAADSARDTKRMRTGGGSTSSSSSSSSSLGGGASRGSVV). Low complexity predominate over residues 189–198 (TSSSSSSSSS). The GRAS domain occupies 232 to 621 (VDTQEAGIRL…RPLIATSAWR (390 aa)). The interval 239–294 (IRLVHALLACAEAVQQENFAAAEALVKQIPTLAASQGGAMRKVAAYFGEALARRVY) is leucine repeat I (LRI). The segment at 241–278 (LVHALLACAEAVQQENFAAAEALVKQIPTLAASQGGAM) is required for possible homodimerization. Residues 246–250 (LACAE) carry the LxCxE motif motif. The tract at residues 313-378 (HAHFYESCPY…GGPPSFRLTG (66 aa)) is VHIID. Positions 344 to 348 (VHVVD) match the VHIID motif. Residues 392–431 (QVGWKLAQFAHTIRVDFQYRGLVAATLADLEPFMLQPEGE) form a leucine repeat II (LRII) region. The segment at 441 to 542 (IAVNSVFELH…EVYLGRQICN (102 aa)) is PFYRE. An LXXLL motif motif is present at residues 449-453 (LHRLL). Residues 545 to 621 (ACEGAERTER…RPLIATSAWR (77 aa)) are SAW.

It belongs to the GRAS family. DELLA subfamily. May be a homodimer. Interacts directly with the GID2 component of the SCF(GID2) complex. Interacts with GID1 in a GA-dependent manner, probably leading to its interaction with GID2 and its subsequent degradation. Interacts with D14 and GID1 in an strigolactone-dependent manner. Interacts with HD16/EL1. Post-translationally, phosphorylated on Ser/Thr residues in the N-terminal part. Both phosphorylated and unphosphorylated forms are degraded upon GA treatment, suggesting that phosphorylation does not trigger ubiquitination. Phosphorylated by HD16/EL1. Phosphorylation enhances its stability. In terms of processing, ubiquitinated. Upon GA application it is ubiquitinated by the SCF(GID2) complex, leading to its subsequent degradation. Expressed in nodes, internodes, leaf sheats of young seedlings and ears of adult plants. Weakly expressed in leaf blade and root.

It localises to the nucleus. Probable transcriptional regulator that acts as a repressor of the gibberellin (GA) signaling pathway. Probably acts by participating in large multiprotein complexes that repress transcription of GA-inducible genes. Upon GA application, it is degraded by the proteasome, allowing the GA signaling pathway. In contrast, its overexpression prevents the GA signaling pathway and induces a dwarf phenotype. This chain is DELLA protein SLR1, found in Oryza sativa subsp. japonica (Rice).